We begin with the raw amino-acid sequence, 95 residues long: MVRIRLTRMGKRKQPFYRIVVVDSRKRRDGAYIESLGYYNPLKEGEIKIDVERAVDWILKGAQPSDTVRDIFKKFGVMKRVHEIKYGKKEEATSE.

The protein belongs to the bacterial ribosomal protein bS16 family.

In Thermotoga neapolitana (strain ATCC 49049 / DSM 4359 / NBRC 107923 / NS-E), this protein is Small ribosomal subunit protein bS16.